The sequence spans 398 residues: Dual-specificity RNA methyltransferase RlmN (398 aa).

Catalysis depends on E119, which acts as the Proton acceptor. Residues 125 to 364 (EADRATLCVS…TIVRKTRGDD (240 aa)) enclose the Radical SAM core domain. C132 and C369 are oxidised to a cystine. [4Fe-4S] cluster-binding residues include C139, C143, and C146. S-adenosyl-L-methionine-binding positions include 193-194 (GE), S225, 247-249 (SLH), and N326. C369 functions as the S-methylcysteine intermediate in the catalytic mechanism.

This sequence belongs to the radical SAM superfamily. RlmN family. [4Fe-4S] cluster is required as a cofactor.

The protein resides in the cytoplasm. It carries out the reaction adenosine(2503) in 23S rRNA + 2 reduced [2Fe-2S]-[ferredoxin] + 2 S-adenosyl-L-methionine = 2-methyladenosine(2503) in 23S rRNA + 5'-deoxyadenosine + L-methionine + 2 oxidized [2Fe-2S]-[ferredoxin] + S-adenosyl-L-homocysteine. It catalyses the reaction adenosine(37) in tRNA + 2 reduced [2Fe-2S]-[ferredoxin] + 2 S-adenosyl-L-methionine = 2-methyladenosine(37) in tRNA + 5'-deoxyadenosine + L-methionine + 2 oxidized [2Fe-2S]-[ferredoxin] + S-adenosyl-L-homocysteine. In terms of biological role, specifically methylates position 2 of adenine 2503 in 23S rRNA and position 2 of adenine 37 in tRNAs. m2A2503 modification seems to play a crucial role in the proofreading step occurring at the peptidyl transferase center and thus would serve to optimize ribosomal fidelity. The protein is Dual-specificity RNA methyltransferase RlmN of Yersinia pseudotuberculosis serotype O:3 (strain YPIII).